A 285-amino-acid polypeptide reads, in one-letter code: D-apionate oxidoisomerase (285 aa).

NAD(+) contacts are provided by residues 15–17, E36, and D71; that span reads GKM. Zn(2+)-binding residues include H116 and E186.

Belongs to the ApnO family. Requires Zn(2+) as cofactor.

The catalysed reaction is D-apionate + NAD(+) = 3-oxoisoapionate + NADH + H(+). Its pathway is carbohydrate metabolism. Functionally, involved in catabolism of D-apiose. Catalyzes the conversion of D-apionate to 3-oxo-isoapionate. The chain is D-apionate oxidoisomerase from Pectobacterium atrosepticum (strain SCRI 1043 / ATCC BAA-672) (Erwinia carotovora subsp. atroseptica).